Consider the following 615-residue polypeptide: uncharacterized protein (615 aa).

Asp-403 acts as the Proton acceptor in catalysis. Glu-406 serves as the catalytic Proton donor.

Belongs to the glycosyl hydrolase 15 family.

This is an uncharacterized protein from Methanocaldococcus jannaschii (strain ATCC 43067 / DSM 2661 / JAL-1 / JCM 10045 / NBRC 100440) (Methanococcus jannaschii).